Consider the following 181-residue polypeptide: Inner membrane-spanning protein YciB (181 aa).

5 helical membrane passes run 10 to 30 (LVIFFAVYKFFDIYIASGALI), 50 to 70 (MHLITFAMVTVFGTLTLVFHD), 72 to 92 (AFIKWKVTIIYALFALALGVS), 118 to 138 (VTWYWVSFFAICGLVNIYVAF), and 148 to 168 (FKVFGLTALTLINTVITVFYL).

It belongs to the YciB family.

It is found in the cell inner membrane. Its function is as follows. Plays a role in cell envelope biogenesis, maintenance of cell envelope integrity and membrane homeostasis. The chain is Inner membrane-spanning protein YciB from Shewanella oneidensis (strain ATCC 700550 / JCM 31522 / CIP 106686 / LMG 19005 / NCIMB 14063 / MR-1).